The sequence spans 387 residues: Succinate--CoA ligase [ADP-forming] subunit beta (387 aa).

In terms of domain architecture, ATP-grasp spans 9 to 236; the sequence is RDLFEKYGVP…KAAADPLEAK (228 aa). ATP is bound by residues Lys45, 52–54, Ala94, and Glu99; that span reads GRG. Mg(2+) contacts are provided by Asn191 and Asp205. Substrate-binding positions include Asn256 and 318–320; that span reads GIT.

It belongs to the succinate/malate CoA ligase beta subunit family. In terms of assembly, heterotetramer of two alpha and two beta subunits. The cofactor is Mg(2+).

The enzyme catalyses succinate + ATP + CoA = succinyl-CoA + ADP + phosphate. It catalyses the reaction GTP + succinate + CoA = succinyl-CoA + GDP + phosphate. It participates in carbohydrate metabolism; tricarboxylic acid cycle; succinate from succinyl-CoA (ligase route): step 1/1. Succinyl-CoA synthetase functions in the citric acid cycle (TCA), coupling the hydrolysis of succinyl-CoA to the synthesis of either ATP or GTP and thus represents the only step of substrate-level phosphorylation in the TCA. The beta subunit provides nucleotide specificity of the enzyme and binds the substrate succinate, while the binding sites for coenzyme A and phosphate are found in the alpha subunit. The protein is Succinate--CoA ligase [ADP-forming] subunit beta of Leifsonia xyli subsp. xyli (strain CTCB07).